Consider the following 156-residue polypeptide: Hemerythrin-like protein (156 aa).

Positions 54, 84, 88, 109, 113, 142, and 147 each coordinate Fe cation.

The protein belongs to the hemerythrin family.

Its function is as follows. Oxygen-binding protein. The oxygen-binding site contains two iron atoms. The protein is Hemerythrin-like protein of Nematostella vectensis (Starlet sea anemone).